Consider the following 439-residue polypeptide: Ribosomal protein uS12 methylthiotransferase RimO (439 aa).

Residues 3–113 form the MTTase N-terminal domain; sequence HKVGFVSLGC…VVNAVHQHLP (111 aa). [4Fe-4S] cluster contacts are provided by cysteine 12, cysteine 48, cysteine 77, cysteine 144, cysteine 148, and cysteine 151. In terms of domain architecture, Radical SAM core spans 130 to 367; that stretch reads LTPRHYAYLK…MQVQAEISRN (238 aa). Positions 370 to 436 constitute a TRAM domain; the sequence is KNKIGSTQTV…DYDLYGDLEY (67 aa).

It belongs to the methylthiotransferase family. RimO subfamily. The cofactor is [4Fe-4S] cluster.

The protein resides in the cytoplasm. It catalyses the reaction L-aspartate(89)-[ribosomal protein uS12]-hydrogen + (sulfur carrier)-SH + AH2 + 2 S-adenosyl-L-methionine = 3-methylsulfanyl-L-aspartate(89)-[ribosomal protein uS12]-hydrogen + (sulfur carrier)-H + 5'-deoxyadenosine + L-methionine + A + S-adenosyl-L-homocysteine + 2 H(+). Catalyzes the methylthiolation of an aspartic acid residue of ribosomal protein uS12. This Legionella pneumophila (strain Corby) protein is Ribosomal protein uS12 methylthiotransferase RimO.